We begin with the raw amino-acid sequence, 216 residues long: Adenylate kinase (216 aa).

10–15 (GAGKGT) lines the ATP pocket. An NMP region spans residues 30-59 (STGDIFRANIKEKTPLGIEAKRYIDNGQLV). Residues Thr-31, Arg-36, 57–59 (QLV), 85–88 (GFPR), and Gln-92 contribute to the AMP site. The tract at residues 126–163 (GRRVCTSCGASYHIRFNPPKIEGKCDICDNELIQRKDD) is LID. Arg-127 provides a ligand contact to ATP. Zn(2+)-binding residues include Cys-130 and Cys-133. 136–137 (SY) lines the ATP pocket. Positions 150 and 153 each coordinate Zn(2+). 2 residues coordinate AMP: Arg-160 and Arg-171. Glu-199 serves as a coordination point for ATP.

This sequence belongs to the adenylate kinase family. Monomer.

The protein localises to the cytoplasm. The enzyme catalyses AMP + ATP = 2 ADP. Its pathway is purine metabolism; AMP biosynthesis via salvage pathway; AMP from ADP: step 1/1. In terms of biological role, catalyzes the reversible transfer of the terminal phosphate group between ATP and AMP. Plays an important role in cellular energy homeostasis and in adenine nucleotide metabolism. The protein is Adenylate kinase of Clostridium botulinum (strain Langeland / NCTC 10281 / Type F).